A 519-amino-acid chain; its full sequence is MSIAKNIENDPSKGWVVQKFGGTSVGKFPIKIAVDVAKEYLSTKRVALVCSARSTDTKAEGTTTRLIRATEAALRPAVGSVHDLVRIIETDHVQAARDFIQDVGIQDELIDAFHADCVELEQYLNAIRVLSEVSPRTRDLVIGMGERLSCRFMAAVLKDQGIDSEFIDMSHIIDEQREWRNLDASFYAYLASQLASKVTAVGNKVPVVTGFFGMVPGGLLSQIGRGYTDFCAALLAVGLNADELQIWKEVDGIFTADPRKVPTARLLPLITPEEAAELTYYGSEVIHPFTMSQVVHARIPIRIKNVGNPRGKGTVIFPDTISRHGSATPPHPPKIMPDDISASLANKGATAVTIKDTIMVINIQSNRKISAHGFLASIFAILDKYKLAVDLITTSEVHVSMALYEESDDGNMHEAFVELRRLGTLDILHGLAILSLVGKHMRNTTGYAGRMFCKLAEAQINIEMISQGASEINISCVIDEKMAVKALNVIHKELLEPLALHEVPSQASMLVEKPWLYSA.

A Phosphoserine modification is found at Ser-326. Phosphothreonine is present on Thr-328. The region spanning 436-518 is the ACT domain; it reads LVGKHMRNTT…MLVEKPWLYS (83 aa).

The protein belongs to the aspartokinase family.

The catalysed reaction is L-aspartate + ATP = 4-phospho-L-aspartate + ADP. It participates in amino-acid biosynthesis; L-methionine biosynthesis via de novo pathway; L-homoserine from L-aspartate: step 1/3. Its pathway is amino-acid biosynthesis; L-threonine biosynthesis; L-threonine from L-aspartate: step 1/5. Phosphorylates aspartate, the first step in the biosynthesis of amino acids that derive from aspartate (the aspartate family of amino acids), including methioinine and threonine, the latter of which is a precursor to isoleucine. The polypeptide is Aspartokinase (Schizosaccharomyces pombe (strain 972 / ATCC 24843) (Fission yeast)).